The following is a 520-amino-acid chain: GMP synthase [glutamine-hydrolyzing] (520 aa).

Residues 9–202 enclose the Glutamine amidotransferase type-1 domain; the sequence is SVLIVDFGSQ…IHNIAGIKGD (194 aa). Cys-86 serves as the catalytic Nucleophile. Active-site residues include His-176 and Glu-178. Positions 203 to 395 constitute a GMPS ATP-PPase domain; it reads WSMSAYRQKA…LGLPDSFIGR (193 aa). Position 230-236 (230-236) interacts with ATP; it reads SGGVDSS.

Homodimer.

The enzyme catalyses XMP + L-glutamine + ATP + H2O = GMP + L-glutamate + AMP + diphosphate + 2 H(+). It participates in purine metabolism; GMP biosynthesis; GMP from XMP (L-Gln route): step 1/1. Catalyzes the synthesis of GMP from XMP. This is GMP synthase [glutamine-hydrolyzing] from Rhizobium johnstonii (strain DSM 114642 / LMG 32736 / 3841) (Rhizobium leguminosarum bv. viciae).